The sequence spans 375 residues: Queuine tRNA-ribosyltransferase (375 aa).

Residue D90 is the Proton acceptor of the active site. Residues 90–94, D144, Q193, and G220 each bind substrate; that span reads DSGGF. The tract at residues 251 to 257 is RNA binding; it reads GVGTPED. D270 serves as the catalytic Nucleophile. The segment at 275–279 is RNA binding; important for wobble base 34 recognition; it reads TRNAR. Residues C308, C310, C313, and H339 each coordinate Zn(2+).

Belongs to the queuine tRNA-ribosyltransferase family. In terms of assembly, homodimer. Within each dimer, one monomer is responsible for RNA recognition and catalysis, while the other monomer binds to the replacement base PreQ1. Requires Zn(2+) as cofactor.

The enzyme catalyses 7-aminomethyl-7-carbaguanine + guanosine(34) in tRNA = 7-aminomethyl-7-carbaguanosine(34) in tRNA + guanine. The protein operates within tRNA modification; tRNA-queuosine biosynthesis. In terms of biological role, catalyzes the base-exchange of a guanine (G) residue with the queuine precursor 7-aminomethyl-7-deazaguanine (PreQ1) at position 34 (anticodon wobble position) in tRNAs with GU(N) anticodons (tRNA-Asp, -Asn, -His and -Tyr). Catalysis occurs through a double-displacement mechanism. The nucleophile active site attacks the C1' of nucleotide 34 to detach the guanine base from the RNA, forming a covalent enzyme-RNA intermediate. The proton acceptor active site deprotonates the incoming PreQ1, allowing a nucleophilic attack on the C1' of the ribose to form the product. After dissociation, two additional enzymatic reactions on the tRNA convert PreQ1 to queuine (Q), resulting in the hypermodified nucleoside queuosine (7-(((4,5-cis-dihydroxy-2-cyclopenten-1-yl)amino)methyl)-7-deazaguanosine). The polypeptide is Queuine tRNA-ribosyltransferase (Janthinobacterium sp. (strain Marseille) (Minibacterium massiliensis)).